Consider the following 293-residue polypeptide: Acetyl-coenzyme A carboxylase carboxyl transferase subunit beta (293 aa).

The region spanning 29 to 293 (LWVKCSECSQ…GVKELAEANT (265 aa)) is the CoA carboxyltransferase N-terminal domain. Residues cysteine 33, cysteine 36, cysteine 52, and cysteine 55 each coordinate Zn(2+). The C4-type zinc finger occupies 33 to 55 (CSECSQVAYRKDLISNFNVCNNC).

The protein belongs to the AccD/PCCB family. In terms of assembly, acetyl-CoA carboxylase is a heterohexamer composed of biotin carboxyl carrier protein (AccB), biotin carboxylase (AccC) and two subunits each of ACCase subunit alpha (AccA) and ACCase subunit beta (AccD). Zn(2+) is required as a cofactor.

The protein localises to the cytoplasm. It catalyses the reaction N(6)-carboxybiotinyl-L-lysyl-[protein] + acetyl-CoA = N(6)-biotinyl-L-lysyl-[protein] + malonyl-CoA. It functions in the pathway lipid metabolism; malonyl-CoA biosynthesis; malonyl-CoA from acetyl-CoA: step 1/1. Component of the acetyl coenzyme A carboxylase (ACC) complex. Biotin carboxylase (BC) catalyzes the carboxylation of biotin on its carrier protein (BCCP) and then the CO(2) group is transferred by the transcarboxylase to acetyl-CoA to form malonyl-CoA. This chain is Acetyl-coenzyme A carboxylase carboxyl transferase subunit beta, found in Prochlorococcus marinus (strain AS9601).